The following is a 449-amino-acid chain: Ribulose bisphosphate carboxylase large chain (449 aa).

Lys5 bears the N6,N6,N6-trimethyllysine mark. Residues Asn114 and Thr164 each contribute to the substrate site. Residue Lys166 is the Proton acceptor of the active site. Lys168 contacts substrate. Mg(2+) is bound by residues Lys192, Asp194, and Glu195. At Lys192 the chain carries N6-carboxylysine. The active-site Proton acceptor is His285. Positions 286, 318, and 370 each coordinate substrate.

The protein belongs to the RuBisCO large chain family. Type I subfamily. Heterohexadecamer of 8 large chains and 8 small chains; disulfide-linked. The disulfide link is formed within the large subunit homodimers. Mg(2+) serves as cofactor. In terms of processing, the disulfide bond which can form in the large chain dimeric partners within the hexadecamer appears to be associated with oxidative stress and protein turnover.

Its subcellular location is the plastid. The protein localises to the chloroplast. It carries out the reaction 2 (2R)-3-phosphoglycerate + 2 H(+) = D-ribulose 1,5-bisphosphate + CO2 + H2O. The catalysed reaction is D-ribulose 1,5-bisphosphate + O2 = 2-phosphoglycolate + (2R)-3-phosphoglycerate + 2 H(+). Functionally, ruBisCO catalyzes two reactions: the carboxylation of D-ribulose 1,5-bisphosphate, the primary event in carbon dioxide fixation, as well as the oxidative fragmentation of the pentose substrate in the photorespiration process. Both reactions occur simultaneously and in competition at the same active site. This chain is Ribulose bisphosphate carboxylase large chain, found in Zamioculcas zamiifolia (Aroid palm).